The primary structure comprises 423 residues: vacuole-related protein 17 (423 aa).

An N-acetylalanine modification is found at A2. Residues 109-134 (ATVPNEAPNDSPQSQSTRSSLGSFQP) are disordered. Residues 110-170 (TVPNEAPNDS…NPINEVDCPS (61 aa)) form an MYO2-binding region. Residues 116-131 (PNDSPQSQSTRSSLGS) are compositionally biased toward polar residues. Phosphoserine is present on S119. T149 is modified (phosphothreonine). Residues 150–211 (PSKPPKKSVG…SKKPSSSDTY (62 aa)) form a disordered region. A Phosphoserine modification is found at S178. Residues 182–192 (QPARNRTLRAA) are compositionally biased toward basic residues. The span at 199–211 (LNKSKKPSSSDTY) shows a compositional bias: polar residues. T248 carries the phosphothreonine modification. S269 carries the post-translational modification Phosphoserine. Positions 290–380 (SASFFRPSNP…ISESFQSKRG (91 aa)) are VAC8-binding.

The protein belongs to the VAC17 family. Interacts with MYO2 and VAC8. Interacts with ATG18.

Its subcellular location is the vacuole membrane. Its function is as follows. Vacuole-specific MYO2 receptor required for vacuole inheritance. Binds simultaneously to MYO2 and to VAC8, a vacuolar membrane protein, forming a transport complex which moves the attached vacuole membrane along actin cables into the bud. Once the vacuole arrives in the bud, VAC17 is degraded, depositing the vacuole in its correct location. The sequence is that of vacuole-related protein 17 (VAC17) from Saccharomyces cerevisiae (strain ATCC 204508 / S288c) (Baker's yeast).